A 637-amino-acid polypeptide reads, in one-letter code: Early transcription factor 70 kDa subunit (637 aa).

The 154-residue stretch at 32–185 folds into the Helicase ATP-binding domain; that stretch reads RTIIDENRSV…GHIIDLMSEE (154 aa). 45 to 52 is an ATP binding site; that stretch reads HIMGSGKT. Positions 135–138 match the DEXH box motif; sequence DEAH. In terms of domain architecture, Helicase C-terminal spans 327 to 507; sequence KFKYFINRIQ…VLPFDIKKLL (181 aa).

The protein belongs to the helicase family. VETF subfamily. Heterodimer of a 70 kDa and a 82 kDa subunit. Part of the early transcription complex composed of ETF, RAP94/OPG109, and the DNA-directed RNA polymerase.

The protein localises to the virion. Its function is as follows. Acts with RNA polymerase to initiate transcription from early gene promoters. Is recruited by the RPO-associated protein of 94 kDa RAP94/OPG109 to form the early transcription complex, which also contains the core RNA polymerase. ETF heterodimer binds to early gene promoters. The polypeptide is Early transcription factor 70 kDa subunit (OPG118) (Homo sapiens (Human)).